We begin with the raw amino-acid sequence, 395 residues long: RNA ligase 1 (395 aa).

The ATP site is built by Y48, R65, and K83. Residue K113 is the N6-AMP-lysine intermediate of the active site. 3 residues coordinate ATP: E173, K255, and K257. D285 lines the Mg(2+) pocket.

It depends on Mg(2+) as a cofactor. The cofactor is Mn(2+).

The catalysed reaction is ATP + (ribonucleotide)n-3'-hydroxyl + 5'-phospho-(ribonucleotide)m = (ribonucleotide)n+m + AMP + diphosphate.. In terms of biological role, RNA ligase that ligates single-stranded nucleic acids in an ATP-dependent manner. Catalyzes both inter- and intra-molecular single-stranded DNA (ssDNA) ligation to &gt;50% completion in a matter of hours at an elevated temperature, although favoring intra-molecular ligation on RNA and single-stranded DNA substrates. Is able to catalyze the adenylation reaction of ssDNA 3'-terminal phosphate (ssDNA 3'p) to 3'-adenylated DNA (ssDNA 3'pp5'A). Does not have significant 3'-adenylation activity with a 3'-phosphorylated nicked dsDNA substrate. This Thermus scotoductus protein is RNA ligase 1.